Reading from the N-terminus, the 160-residue chain is Nucleotide-binding protein Smal_3487 (160 aa).

It belongs to the YajQ family.

Functionally, nucleotide-binding protein. This Stenotrophomonas maltophilia (strain R551-3) protein is Nucleotide-binding protein Smal_3487.